A 32-amino-acid chain; its full sequence is U13-ctenitoxin-Pn1a (32 aa).

Intrachain disulfides connect C3-C17, C10-C21, and C16-C30.

Expressed by the venom gland.

Its subcellular location is the secreted. Its function is as follows. Acts as a neurotoxin. This chain is U13-ctenitoxin-Pn1a, found in Phoneutria nigriventer (Brazilian armed spider).